A 239-amino-acid polypeptide reads, in one-letter code: Ribose-5-phosphate isomerase A (239 aa).

Substrate is bound by residues 39–42, 95–98, and 108–111; these read SGST, DGAD, and KGGG. Glu117 serves as the catalytic Proton acceptor. Lys135 contributes to the substrate binding site.

This sequence belongs to the ribose 5-phosphate isomerase family. As to quaternary structure, homodimer.

It catalyses the reaction aldehydo-D-ribose 5-phosphate = D-ribulose 5-phosphate. Its pathway is carbohydrate degradation; pentose phosphate pathway; D-ribose 5-phosphate from D-ribulose 5-phosphate (non-oxidative stage): step 1/1. Functionally, catalyzes the reversible conversion of ribose-5-phosphate to ribulose 5-phosphate. In Chlamydia muridarum (strain MoPn / Nigg), this protein is Ribose-5-phosphate isomerase A.